The following is a 912-amino-acid chain: Probable dipeptidyl-aminopeptidase B (912 aa).

Positions Met1–Leu74 are disordered. The Cytoplasmic portion of the chain corresponds to Met1–Arg85. The segment covering Asp16 to Val27 has biased composition (low complexity). The segment covering Arg30–Leu50 has biased composition (basic and acidic residues). Over residues Asp51–Glu63 the composition is skewed to acidic residues. A helical; Signal-anchor for type II membrane protein transmembrane segment spans residues Ile86–Ile106. Topologically, residues Ala107–Val912 are vacuolar. An N-linked (GlcNAc...) asparagine glycan is attached at Asn344. Ser749 (charge relay system) is an active-site residue. An N-linked (GlcNAc...) asparagine glycan is attached at Asn808. Residues Asp826 and His859 each act as charge relay system in the active site. The tract at residues Pro892–Val912 is disordered.

This sequence belongs to the peptidase S9B family.

Its subcellular location is the vacuole membrane. The enzyme catalyses Release of an N-terminal dipeptide, Xaa-Yaa-|-Zaa-, from a polypeptide, preferentially when Yaa is Pro, provided Zaa is neither Pro nor hydroxyproline.. In terms of biological role, type IV dipeptidyl-peptidase which removes N-terminal dipeptides sequentially from polypeptides having unsubstituted N-termini provided that the penultimate residue is proline. The polypeptide is Probable dipeptidyl-aminopeptidase B (DAPB) (Fusarium vanettenii (strain ATCC MYA-4622 / CBS 123669 / FGSC 9596 / NRRL 45880 / 77-13-4) (Fusarium solani subsp. pisi)).